The sequence spans 622 residues: Membrane protein insertase YidC (622 aa).

A helical membrane pass occupies residues 8-28; sequence LFLALILSMGIWMGVNYFFFP. The segment covering 33–61 has biased composition (basic and acidic residues); the sequence is KTSETKEVKVDKPSDDKQDQIQKEKKESR. Residues 33 to 70 form a disordered region; sequence KTSETKEVKVDKPSDDKQDQIQKEKKESRTTIPSKGTK. Transmembrane regions (helical) follow at residues 413–433, 484–504, 532–552, and 571–591; these read FTIP…KLVF, VGGC…YTAF, AIPY…LMVG, and MLMY…PSGV.

The protein belongs to the OXA1/ALB3/YidC family. Type 1 subfamily. In terms of assembly, interacts with the Sec translocase complex via SecD. Specifically interacts with transmembrane segments of nascent integral membrane proteins during membrane integration.

It is found in the cell inner membrane. Functionally, required for the insertion and/or proper folding and/or complex formation of integral membrane proteins into the membrane. Involved in integration of membrane proteins that insert both dependently and independently of the Sec translocase complex, as well as at least some lipoproteins. Aids folding of multispanning membrane proteins. The chain is Membrane protein insertase YidC from Leptospira borgpetersenii serovar Hardjo-bovis (strain JB197).